Reading from the N-terminus, the 403-residue chain is S-adenosylmethionine sensor upstream of mTORC1 (403 aa).

Over residues 1-10 the composition is skewed to gly residues; it reads MEPGPGGRGA. The interval 1-32 is disordered; that stretch reads MEPGPGGRGAARGQRPPNAAQPREQERKLEQE. The span at 11–22 shows a compositional bias: low complexity; it reads ARGQRPPNAAQP. Basic and acidic residues predominate over residues 23–32; that stretch reads REQERKLEQE. Arg-93, Gly-170, Asp-188, Asp-200, Phe-201, and Ser-242 together coordinate S-adenosyl-L-methionine.

It belongs to the BMT2/SAMTOR family. As to quaternary structure, interacts with the GATOR1 complex; interaction is disrupted when SAMTOR binds S-adenosyl-L-methionine. Interacts with the KICSTOR complex; interaction is disrupted when SAMTOR binds S-adenosyl-L-methionine.

S-adenosyl-L-methionine-binding protein that acts as an inhibitor of mTORC1 signaling via interaction with the GATOR1 and KICSTOR complexes. Acts as a sensor of S-adenosyl-L-methionine to signal methionine sufficiency to mTORC1: in presence of methionine, binds S-adenosyl-L-methionine, leading to disrupt interaction with the GATOR1 and KICSTOR complexes and promote mTORC1 signaling. Upon methionine starvation, S-adenosyl-L-methionine levels are reduced, thereby promoting the association with GATOR1 and KICSTOR, leading to inhibit mTORC1 signaling. Probably also acts as a S-adenosyl-L-methionine-dependent methyltransferase. The sequence is that of S-adenosylmethionine sensor upstream of mTORC1 from Mus musculus (Mouse).